A 48-amino-acid chain; its full sequence is Histone H4 (48 aa).

The segment covering 1 to 14 (MGGKGGKGGKGLGK) has biased composition (gly residues). The segment at 1-23 (MGGKGGKGGKGLGKVGAKKRHSR) is disordered.

The protein belongs to the histone H4 family. The nucleosome is a histone octamer containing two molecules each of H2A, H2B, H3 and H4 assembled in one H3-H4 heterotetramer and two H2A-H2B heterodimers. The octamer wraps approximately 147 bp of DNA.

Its subcellular location is the nucleus. It localises to the chromosome. Functionally, core component of nucleosome. Nucleosomes wrap and compact DNA into chromatin, limiting DNA accessibility to the cellular machineries which require DNA as a template. Histones thereby play a central role in transcription regulation, DNA repair, DNA replication and chromosomal stability. DNA accessibility is regulated via a complex set of post-translational modifications of histones, also called histone code, and nucleosome remodeling. This Blepharisma japonicum protein is Histone H4.